We begin with the raw amino-acid sequence, 265 residues long: 4-hydroxy-tetrahydrodipicolinate reductase (265 aa).

NAD(+) contacts are provided by residues 7–12 (GASGRM) and Asp-33. Arg-34 is a binding site for NADP(+). NAD(+) is bound by residues 96 to 98 (GTT) and 120 to 123 (ASNF). His-153 (proton donor/acceptor) is an active-site residue. His-154 provides a ligand contact to (S)-2,3,4,5-tetrahydrodipicolinate. The Proton donor role is filled by Lys-157. Residue 163–164 (GT) coordinates (S)-2,3,4,5-tetrahydrodipicolinate.

This sequence belongs to the DapB family.

It localises to the cytoplasm. It carries out the reaction (S)-2,3,4,5-tetrahydrodipicolinate + NAD(+) + H2O = (2S,4S)-4-hydroxy-2,3,4,5-tetrahydrodipicolinate + NADH + H(+). The enzyme catalyses (S)-2,3,4,5-tetrahydrodipicolinate + NADP(+) + H2O = (2S,4S)-4-hydroxy-2,3,4,5-tetrahydrodipicolinate + NADPH + H(+). The protein operates within amino-acid biosynthesis; L-lysine biosynthesis via DAP pathway; (S)-tetrahydrodipicolinate from L-aspartate: step 4/4. Functionally, catalyzes the conversion of 4-hydroxy-tetrahydrodipicolinate (HTPA) to tetrahydrodipicolinate. The polypeptide is 4-hydroxy-tetrahydrodipicolinate reductase (Paraburkholderia phymatum (strain DSM 17167 / CIP 108236 / LMG 21445 / STM815) (Burkholderia phymatum)).